A 184-amino-acid polypeptide reads, in one-letter code: Tumor necrosis factor receptor superfamily member 13C (184 aa).

Over 1–78 the chain is Extracellular; the sequence is MRRGPRSLRG…EAALPLPGLL (78 aa). The TNFR-Cys; truncated repeat unit spans residues 18–35; that stretch reads PCVPAECFDLLVRHCVAC. Cystine bridges form between C19–C32 and C24–C35. The tract at residues 26–31 is essential for TNFSF13B/TALL1/BAFF/BLyS binding; it reads DLLVRH. Residues 43-62 are disordered; it reads PKPAGASSPAPRTALQPQES. Residues 79 to 99 form a helical; Signal-anchor for type III membrane protein membrane-spanning segment; it reads FGAPALLGLALVLALVLVGLV. The Cytoplasmic segment spans residues 100–184; the sequence is SWRRRQRRLR…TTKTAGPEQQ (85 aa). The disordered stretch occupies residues 107 to 184; that stretch reads RLRGASSAEA…TTKTAGPEQQ (78 aa). The segment covering 118–128 has biased composition (basic and acidic residues); the sequence is DGDKDAPEPLD. Polar residues predominate over residues 168–184; that stretch reads LGSTELVTTKTAGPEQQ.

Highly expressed in spleen and lymph node, and in resting B-cells. Detected at lower levels in activated B-cells, resting CD4+ T-cells, in thymus and peripheral blood leukocytes.

It is found in the membrane. B-cell receptor specific for TNFSF13B/TALL1/BAFF/BLyS. Promotes the survival of mature B-cells and the B-cell response. This is Tumor necrosis factor receptor superfamily member 13C (TNFRSF13C) from Homo sapiens (Human).